We begin with the raw amino-acid sequence, 323 residues long: Aquaporin-4 (323 aa).

Over 1–36 the chain is Cytoplasmic; the sequence is MSDGAAARRWGKCGHSCSRESIMVAFKGVWTQAFWK. 2 S-palmitoyl cysteine lipidation sites follow: Cys13 and Cys17. The chain crosses the membrane as a helical span at residues 37 to 57; the sequence is AVSAEFLATLIFVLLGVGSTI. At 58-69 the chain is on the extracellular side; the sequence is NWGGSENPLPVD. Residues 70–89 form a helical membrane-spanning segment; sequence MVLISLCFGLSIATMVQCFG. At 90-93 the chain is on the cytoplasmic side; that stretch reads HISG. Positions 94–101 form an intramembrane region, discontinuously helical; that stretch reads GHINPAVT. An NPA 1 motif is present at residues 97–99; the sequence is NPA. The Cytoplasmic segment spans residues 102–115; sequence VAMVCTRKISIAKS. Ser111 carries the post-translational modification Phosphoserine; by PKG. Residues 116-136 traverse the membrane as a helical segment; that stretch reads VFYIIAQCLGAIIGAGILYLV. At 137-155 the chain is on the extracellular side; sequence TPPSVVGGLGVTTVHGNLT. Asn153 is a glycosylation site (N-linked (GlcNAc...) asparagine). Residues 156 to 176 form a helical membrane-spanning segment; that stretch reads AGHGLLVELIITFQLVFTIFA. Residues 177–184 lie on the Cytoplasmic side of the membrane; it reads SCDSKRTD. The residue at position 180 (Ser180) is a Phosphoserine; by PKC. Residues 185-205 traverse the membrane as a helical segment; it reads VTGSIALAIGFSVAIGHLFAI. Asn206 is a glycosylation site (N-linked (GlcNAc...) asparagine). At 206-208 the chain is on the extracellular side; it reads NYT. The discontinuously helical intramembrane region spans 209–222; that stretch reads GASMNPARSFGPAV. The NPA 2 signature appears at 213-215; it reads NPA. Over 223–231 the chain is Extracellular; the sequence is IMGNWANHW. Residues 232-252 traverse the membrane as a helical segment; the sequence is IYWVGPIMGAVLAGALYEYVF. Residues 253–323 are Cytoplasmic-facing; the sequence is CPDVELKRRL…DSSGEVLSSV (71 aa). Residues Ser276 and Ser285 each carry the phosphoserine modification. Residue Thr289 is modified to Phosphothreonine. Position 321 is a phosphoserine (Ser321).

The protein belongs to the MIP/aquaporin (TC 1.A.8) family. In terms of assembly, homotetramer. The tetramers can form oligomeric arrays in membranes. The size of the oligomers differs between tissues and is smaller in skeletal muscle than in brain. Interaction between AQP4 oligomeric arrays in close-by cells can contribute to cell-cell adhesion. Part of a complex containing MLC1, TRPV4, HEPACAM and ATP1B1. Post-translationally, phosphorylation by PKC at Ser-180 reduces conductance by 50%. Phosphorylation by PKG at Ser-111 in response to glutamate increases conductance by 40%; this increase is not due to increased presence at the cell membrane. In terms of processing, isoform 2: Palmitoylated on its N-terminal region. Isoform 1: Not palmitoylated. In terms of tissue distribution, detected in brain cortex, especially around cortical blood vessels, and subjacent to pia, with lower levels in parenchymal membranes. Detected in ependymal and astroglial cells in brain. Detected in supporting Hensen's cells, inner sulcus cells and Claudius cells in the inner ear. Detected in skeletal muscle. Detected in gastric parietal cells. Detected in principal cells in collecting ducts in kidney medulla (at protein level). Detected in brain, heart and skeletal muscle.

The protein resides in the cell membrane. It is found in the basolateral cell membrane. The protein localises to the endosome membrane. It localises to the sarcolemma. Its subcellular location is the cell projection. It carries out the reaction H2O(in) = H2O(out). Forms a water-specific channel. Plays an important role in brain water homeostasis and in glymphatic solute transport. Required for a normal rate of water exchange across the blood brain interface. Required for normal levels of cerebrospinal fluid influx into the brain cortex and parenchyma along paravascular spaces that surround penetrating arteries, and for normal drainage of interstitial fluid along paravenous drainage pathways. Thereby, it is required for normal clearance of solutes from the brain interstitial fluid, including soluble beta-amyloid peptides derived from APP. Plays a redundant role in urinary water homeostasis and urinary concentrating ability. This is Aquaporin-4 (Aqp4) from Mus musculus (Mouse).